A 463-amino-acid chain; its full sequence is Methionine aminopeptidase 2-2 (463 aa).

Residues 1-97 (MGSKSPEGHW…TLSVTELKQT (97 aa)) form a disordered region. The segment covering 27–36 (DPQTSQNGSG) has biased composition (polar residues). A compositionally biased stretch (acidic residues) spans 46 to 57 (GDDDDDDEDAEE). The segment covering 69–85 (KKKKRKKSNKKKKKKTK) has biased composition (basic residues). Residues 86-97 (SGTLSVTELKQT) are compositionally biased toward polar residues. Position 215 (His215) interacts with substrate. A divalent metal cation-binding residues include Asp236, Asp247, and His316. His324 lines the substrate pocket. The a divalent metal cation site is built by Glu349 and Glu444.

This sequence belongs to the peptidase M24A family. Methionine aminopeptidase eukaryotic type 2 subfamily. It depends on Co(2+) as a cofactor. Zn(2+) serves as cofactor. Requires Mn(2+) as cofactor. Fe(2+) is required as a cofactor.

It localises to the cytoplasm. It catalyses the reaction Release of N-terminal amino acids, preferentially methionine, from peptides and arylamides.. In terms of biological role, cotranslationally removes the N-terminal methionine from nascent proteins. The N-terminal methionine is often cleaved when the second residue in the primary sequence is small and uncharged (Met-Ala-, Cys, Gly, Pro, Ser, Thr, or Val). This chain is Methionine aminopeptidase 2-2, found in Neosartorya fischeri (strain ATCC 1020 / DSM 3700 / CBS 544.65 / FGSC A1164 / JCM 1740 / NRRL 181 / WB 181) (Aspergillus fischerianus).